Consider the following 554-residue polypeptide: MPVQLTTALRVVGTSLFALVVLGGILAAYVTGYQFIHTEKHYLSFGLYGAILGLHLLIQSLFAFLEHRRMRRAGRPLKLHCSQRPRSVALCIAAYQEDPEYLRKCLRSAQRIAFPNLKVVMVVDGNRQEDTYMLDIFHEVLGGTEQAGFFVWRSNFHEAGEGETEASLQEGMERVRAVVWASTFSCIMQKWGGKREVMYTAFKALGNSVDYIQVCDSDTVLDPACTIEMLRVLEEDPQVGGVGGDVQILNKYDSWISFLSSVRYWMAFNVERACQSYFGCVQCISGPLGMYRNSLLQQFLEDWYHQKFLGSKCSFGDDRHLTNRVLSLGYRTKYTARSKCLTETPTRYLRWLNQQTRWSKSYFREWLYNSLWFHKHHLWMTYESVVTGFFPFFLIATVIQLFYRGRIWNILLFLLTVQLVGIIKATYACFLRGNAEMIFMSLYSLLYMSSLLPAKIFAIATINKSGWGTSGRKTIVVNFIGLIPVSIWVAVLLGGLAYTAYCQDLFSETELAFLVSGAILYGCYWVALLMLYLAIIARRCGKKPEQYSLAFAEV.

Over 1-15 the chain is Cytoplasmic; the sequence is MPVQLTTALRVVGTS. Residues 16–36 traverse the membrane as a helical segment; the sequence is LFALVVLGGILAAYVTGYQFI. Residues 37–44 lie on the Extracellular side of the membrane; that stretch reads HTEKHYLS. Residues 45–65 traverse the membrane as a helical segment; that stretch reads FGLYGAILGLHLLIQSLFAFL. Topologically, residues 66 to 378 are cytoplasmic; that stretch reads EHRRMRRAGR…NSLWFHKHHL (313 aa). The chain crosses the membrane as a helical span at residues 379-399; sequence WMTYESVVTGFFPFFLIATVI. The Extracellular segment spans residues 400-409; sequence QLFYRGRIWN. A helical transmembrane segment spans residues 410–430; sequence ILLFLLTVQLVGIIKATYACF. Residues 431–441 are Cytoplasmic-facing; that stretch reads LRGNAEMIFMS. The chain crosses the membrane as a helical span at residues 442-462; the sequence is LYSLLYMSSLLPAKIFAIATI. Residue N463 is glycosylated (N-linked (GlcNAc...) asparagine). At 463-474 the chain is on the extracellular side; it reads NKSGWGTSGRKT. Residues 475–495 traverse the membrane as a helical segment; the sequence is IVVNFIGLIPVSIWVAVLLGG. The Cytoplasmic segment spans residues 496–516; the sequence is LAYTAYCQDLFSETELAFLVS. A helical transmembrane segment spans residues 517-537; sequence GAILYGCYWVALLMLYLAIIA. Residues 538–554 lie on the Extracellular side of the membrane; the sequence is RRCGKKPEQYSLAFAEV.

Belongs to the NodC/HAS family. Mg(2+) serves as cofactor. Post-translationally, O-GlcNAcylation increases the hyaluronan synthase activity, HAS3 stability and its plasma membrane residence. The concentration of UDP-GlcNAc controls the level of O-GlcNAc modification.

Its subcellular location is the cell membrane. It localises to the golgi apparatus membrane. The protein resides in the golgi apparatus. It is found in the trans-Golgi network membrane. The protein localises to the cytoplasmic vesicle. The catalysed reaction is [hyaluronan](n) + UDP-N-acetyl-alpha-D-glucosamine = N-acetyl-beta-D-glucosaminyl-(1-&gt;4)-[hyaluronan](n) + UDP + H(+). The enzyme catalyses N-acetyl-beta-D-glucosaminyl-(1-&gt;4)-[hyaluronan](n) + UDP-alpha-D-glucuronate = [hyaluronan](n+1) + UDP + H(+). It participates in glycan biosynthesis; hyaluronan biosynthesis. Catalyzes the addition of GlcNAc or GlcUA monosaccharides to the nascent hyaluronan polymer. Therefore, it is essential to hyaluronan synthesis a major component of most extracellular matrices that has a structural role in tissues architectures and regulates cell adhesion, migration and differentiation. This is one of three isoenzymes responsible for cellular hyaluronan synthesis. The chain is Hyaluronan synthase 3 (Has3) from Mus musculus (Mouse).